Here is a 186-residue protein sequence, read N- to C-terminus: Small ribosomal subunit protein eS7 (186 aa).

The protein belongs to the eukaryotic ribosomal protein eS7 family. As to quaternary structure, component of the small ribosomal subunit. Mature ribosomes consist of a small (40S) and a large (60S) subunit. The 40S subunit contains about 32 different proteins and 1 molecule of RNA (18S). The 60S subunit contains 45 different proteins and 3 molecules of RNA (25S, 5.8S and 5S).

It is found in the cytoplasm. In terms of biological role, component of the ribosome, a large ribonucleoprotein complex responsible for the synthesis of proteins in the cell. The small ribosomal subunit (SSU) binds messenger RNAs (mRNAs) and translates the encoded message by selecting cognate aminoacyl-transfer RNA (tRNA) molecules. The large subunit (LSU) contains the ribosomal catalytic site termed the peptidyl transferase center (PTC), which catalyzes the formation of peptide bonds, thereby polymerizing the amino acids delivered by tRNAs into a polypeptide chain. The nascent polypeptides leave the ribosome through a tunnel in the LSU and interact with protein factors that function in enzymatic processing, targeting, and the membrane insertion of nascent chains at the exit of the ribosomal tunnel. RPS7A is involved in nucleolar processing of pre-18S ribosomal RNA and ribosome assembly. The polypeptide is Small ribosomal subunit protein eS7 (RPS7A) (Candida albicans (strain SC5314 / ATCC MYA-2876) (Yeast)).